Consider the following 63-residue polypeptide: Large ribosomal subunit protein bL32 (63 aa).

The span at 1–18 (MAHPKAKVSKSRRDKRRA) shows a compositional bias: basic residues. Residues 1–25 (MAHPKAKVSKSRRDKRRAQFNARTK) form a disordered region.

It belongs to the bacterial ribosomal protein bL32 family.

This chain is Large ribosomal subunit protein bL32, found in Chlorobium phaeovibrioides (strain DSM 265 / 1930) (Prosthecochloris vibrioformis (strain DSM 265)).